The chain runs to 673 residues: DNA ligase (673 aa).

NAD(+)-binding positions include 33–37 (DYEYD), 82–83 (SL), and Glu-113. Residue Lys-115 is the N6-AMP-lysine intermediate of the active site. NAD(+)-binding residues include Arg-136, Glu-170, Lys-285, and Lys-309. Residues Cys-403, Cys-406, Cys-421, and Cys-426 each contribute to the Zn(2+) site. The BRCT domain maps to 583–672 (AKSDILKGYT…SHEEVEKILM (90 aa)).

This sequence belongs to the NAD-dependent DNA ligase family. LigA subfamily. Mg(2+) serves as cofactor. Requires Mn(2+) as cofactor.

The enzyme catalyses NAD(+) + (deoxyribonucleotide)n-3'-hydroxyl + 5'-phospho-(deoxyribonucleotide)m = (deoxyribonucleotide)n+m + AMP + beta-nicotinamide D-nucleotide.. Functionally, DNA ligase that catalyzes the formation of phosphodiester linkages between 5'-phosphoryl and 3'-hydroxyl groups in double-stranded DNA using NAD as a coenzyme and as the energy source for the reaction. It is essential for DNA replication and repair of damaged DNA. The chain is DNA ligase from Caldicellulosiruptor saccharolyticus (strain ATCC 43494 / DSM 8903 / Tp8T 6331).